Here is a 397-residue protein sequence, read N- to C-terminus: 1-deoxy-D-xylulose 5-phosphate reductoisomerase (397 aa).

Thr10, Gly11, Ser12, Ile13, Gly36, Asn38, and Asn124 together coordinate NADPH. Residue Lys125 participates in 1-deoxy-D-xylulose 5-phosphate binding. Glu126 is a binding site for NADPH. Asp150 contacts Mn(2+). 1-deoxy-D-xylulose 5-phosphate-binding residues include Ser151, Glu152, Ser186, and His209. Glu152 serves as a coordination point for Mn(2+). Position 215 (Gly215) interacts with NADPH. Ser222, Asn227, Lys228, and Glu231 together coordinate 1-deoxy-D-xylulose 5-phosphate. Glu231 is a binding site for Mn(2+).

Belongs to the DXR family. The cofactor is Mg(2+). Requires Mn(2+) as cofactor.

The enzyme catalyses 2-C-methyl-D-erythritol 4-phosphate + NADP(+) = 1-deoxy-D-xylulose 5-phosphate + NADPH + H(+). Its pathway is isoprenoid biosynthesis; isopentenyl diphosphate biosynthesis via DXP pathway; isopentenyl diphosphate from 1-deoxy-D-xylulose 5-phosphate: step 1/6. In terms of biological role, catalyzes the NADPH-dependent rearrangement and reduction of 1-deoxy-D-xylulose-5-phosphate (DXP) to 2-C-methyl-D-erythritol 4-phosphate (MEP). This Photobacterium profundum (strain SS9) protein is 1-deoxy-D-xylulose 5-phosphate reductoisomerase.